A 71-amino-acid polypeptide reads, in one-letter code: Sodium channel neurotoxin MeuNaTxalpha-12 (71 aa).

Positions 1-6 (MTGVES) are cleaved as a signal peptide. Residues 8 to 70 (RDAYIAQGNN…VPIRIQGKCQ (63 aa)) form the LCN-type CS-alpha/beta domain. 4 disulfide bridges follow: cysteine 18/cysteine 69, cysteine 22/cysteine 42, cysteine 28/cysteine 52, and cysteine 32/cysteine 54. Position 71 (arginine 71) is a propeptide, removed by a carboxypeptidase.

The protein belongs to the long (4 C-C) scorpion toxin superfamily. Sodium channel inhibitor family. Alpha subfamily. In terms of tissue distribution, expressed by the venom gland.

It is found in the secreted. Functionally, alpha toxins bind voltage-independently at site-3 of sodium channels (Nav) and inhibit the inactivation of the activated channels, thereby blocking neuronal transmission. In Mesobuthus eupeus (Lesser Asian scorpion), this protein is Sodium channel neurotoxin MeuNaTxalpha-12.